The primary structure comprises 353 residues: MAREMRLGGKERMKTGVVKIGLVAALGVVGLISAGGVYAGQPRVISTIQTGATWEPLGREEPLTVPEVHFRVKHSPFKSELVRYGQFQFNDAAWSLQGSYSCASCHYERGQTTGLIWDLGDEGWGSWKNTKYIRGGRYLPPFRHEGFTGHPDEIVGATSSLDRVCGRDPGFVFRSENFSPMRLEALICYIRALEFTGSPFRNADGSLTEAQKRGQKIFEDPKVGCLECHPGDPMDPRALFSDAQTHDVGTGRVGVNGFRSTPGKVFNISALEAGEDPYGVESNTPIIGLDLVKEFDTPTLRDIYASGTYFHDGGARTLMDTINNTVNDKDMHGRTSHLKQQELQDLVEYLKAL.

A signal peptide spans 1 to 39; sequence MAREMRLGGKERMKTGVVKIGLVAALGVVGLISAGGVYA. The heme c site is built by Cys-102, Cys-105, and His-106. Residues Asp-118, Leu-119, Glu-122, Gly-123, Ser-126, Asn-129, Leu-139, and Pro-141 each contribute to the Ca(2+) site. Heme c is bound by residues Cys-165, Cys-225, Cys-228, and His-229. Residues 209–353 enclose the Cytochrome c domain; sequence EAQKRGQKIF…QDLVEYLKAL (145 aa). The Ca(2+) site is built by Asp-296, Ser-306, Gly-307, and Thr-308. His-332 contributes to the heme c binding site.

As to quaternary structure, part of the hydrazine synthase complex that forms an elongated dimer of heterotrimers composed of one alpha, one beta and one gamma subunit. It depends on heme c as a cofactor.

The protein localises to the anammoxosome. It carries out the reaction hydrazine + 3 Fe(III)-[cytochrome c] + H2O = nitric oxide + 3 Fe(II)-[cytochrome c] + NH4(+) + 2 H(+). It participates in nitrogen metabolism. Functionally, component of the hydrazine synthase complex that catalyzes the condensation of nitric oxide (NO) with ammonium to form hydrazine. The gamma subunit catalyzes the first half-reaction, i.e. the three-electron reduction of nitric oxide to hydroxylamine; it may obtain electrons from the triheme cytochrome c kuste2854. Is involved in anaerobic ammonium oxidation (anammox), a biological process in which nitrite is used as the electron acceptor in the conversion of ammonium to dinitrogen gas (N2) and water; this bacterial process has a major role in the Earth's nitrogen cycle and has been estimated to synthesize up to 50% of the dinitrogen gas emitted into our atmosphere from the oceans. The chain is Hydrazine synthase subunit gamma from Kuenenia stuttgartiensis.